The primary structure comprises 260 residues: Adenosylcobinamide-GDP ribazoletransferase (260 aa).

Helical transmembrane passes span 42-62 (PLAG…ANAI), 64-84 (LPPL…TGAL), 117-137 (FAAL…MAII), 144-164 (YALL…LAFW), 192-212 (GLGL…VALI), 214-234 (ALVL…AKIG), and 240-260 (TLGA…VMAL).

Belongs to the CobS family. Mg(2+) serves as cofactor.

It localises to the cell inner membrane. It catalyses the reaction alpha-ribazole + adenosylcob(III)inamide-GDP = adenosylcob(III)alamin + GMP + H(+). It carries out the reaction alpha-ribazole 5'-phosphate + adenosylcob(III)inamide-GDP = adenosylcob(III)alamin 5'-phosphate + GMP + H(+). It participates in cofactor biosynthesis; adenosylcobalamin biosynthesis; adenosylcobalamin from cob(II)yrinate a,c-diamide: step 7/7. Joins adenosylcobinamide-GDP and alpha-ribazole to generate adenosylcobalamin (Ado-cobalamin). Also synthesizes adenosylcobalamin 5'-phosphate from adenosylcobinamide-GDP and alpha-ribazole 5'-phosphate. This chain is Adenosylcobinamide-GDP ribazoletransferase, found in Brucella abortus (strain S19).